Here is a 644-residue protein sequence, read N- to C-terminus: uncharacterized protein (644 aa).

A disordered region spans residues 1 to 35 (MKANGLDNDPARTGMERTDIDSEHPEAQPLLNNNH). Residues 1-90 (MKANGLDNDP…ILNILILINT (90 aa)) lie on the Cytoplasmic side of the membrane. Positions 14 to 26 (GMERTDIDSEHPE) are enriched in basic and acidic residues. Phosphoserine is present on residues S22, S56, and S63. The chain crosses the membrane as a helical span at residues 91–111 (IWLVTTLISDFFFNINILFGF). The Vacuolar portion of the chain corresponds to 112-122 (SNRYASFNDLT). A helical membrane pass occupies residues 123-143 (LIFISIIANSFNLWFNKLGLY). Topologically, residues 144 to 147 (SALD) are cytoplasmic. The chain crosses the membrane as a helical span at residues 148 to 168 (YSLNVTLCVLTLFNLALTYLI). Over 169-174 (KYTRQR) the chain is Vacuolar. A helical transmembrane segment spans residues 175 to 195 (IGFVGTFTYLWTSFSFFIGAI). Over 196–271 (LDWYLLFYNN…EWVSIGFRNT (76 aa)) the chain is Cytoplasmic. The segment at 225–251 (NENHTNSTENRDRSQYGSGSPTPTHRS) is disordered. The span at 239-251 (QYGSGSPTPTHRS) shows a compositional bias: polar residues. A Phosphoserine modification is found at S244. Residues 272–292 (IKFLILIFFALFTLNTLLTTL) traverse the membrane as a helical segment. Over 293–644 (DTYRLTHKLP…IGELGKLTED (352 aa)) the chain is Vacuolar. Residues 348–619 (PIILFEHGGY…IVEGGHEIYK (272 aa)) form the AB hydrolase-1 domain. The interval 469–492 (GRGDGDDGDDGNGNDGDGRNHDKT) is disordered.

It is found in the vacuole membrane. This is an uncharacterized protein from Saccharomyces cerevisiae (strain ATCC 204508 / S288c) (Baker's yeast).